The primary structure comprises 23 residues: M-myrmeciitoxin-Mp2b (23 aa).

Glutamine amide is present on Gln23.

The protein belongs to the formicidae venom precursor-01 superfamily. Ant pilosulin family. As to quaternary structure, heterodimer with M-MIITX-Mp2a (pilosulin-3a) (AC Q26464); disulfide-linked. Only heterodimers (and not monomers) have been identified in the venom. Expressed by the venom gland.

The protein resides in the secreted. Functionally, heterodimer protein that may serve both defensive (pain-inducing) and predatory (insecticidal) roles. Has membrane-disrupting activity and shows induction of non-specific calcium influx into cells,. Shows broad-spectrum activity against a diverse range of bacteria, and cell lines, as well as hemolytic activity (EC(50)=2.18 uM). In vivo, shows moderate insecticidal activity against D.melanogaster and potent anthelmintic activity against the veterinary nematode H.contortus. In addition, intraplantar injection into mice induces nocifensive behavior and mechanical allodynia. This Myrmecia pilosula (Jack jumper ant) protein is M-myrmeciitoxin-Mp2b.